The sequence spans 574 residues: Splicing factor U2af large subunit A (574 aa).

The interval 1–180 (MAEHEEQPYE…SKRVSGFDQG (180 aa)) is disordered. The segment covering 18–41 (PAPASAYAEYPAPEGSPPAAAAKP) has biased composition (low complexity). The span at 53 to 143 (RSQHETQPHD…ERRRDRDRDG (91 aa)) shows a compositional bias: basic and acidic residues. The span at 144 to 172 (HRRHRSRSRSPSKGRDRRSRSRSRSRSSK) shows a compositional bias: basic residues. RRM domains are found at residues 238–321 (RRVY…RPTD), 358–436 (DRIF…RANQ), and 479–565 (QVVS…YPED).

It belongs to the splicing factor SR family.

The protein resides in the nucleus. Functionally, necessary for the splicing of pre-mRNA. This chain is Splicing factor U2af large subunit A (U2AF65A), found in Oryza sativa subsp. japonica (Rice).